A 353-amino-acid chain; its full sequence is Methionine import ATP-binding protein MetN (353 aa).

Residues 11-251 enclose the ABC transporter domain; it reads ITFDRVEKSF…PEHPTTRSFL (241 aa). 48–55 contributes to the ATP binding site; sequence GRSGAGKS.

This sequence belongs to the ABC transporter superfamily. Methionine importer (TC 3.A.1.24) family. The complex is composed of two ATP-binding proteins (MetN), two transmembrane proteins (MetI) and a solute-binding protein (MetQ).

Its subcellular location is the cell inner membrane. The enzyme catalyses L-methionine(out) + ATP + H2O = L-methionine(in) + ADP + phosphate + H(+). The catalysed reaction is D-methionine(out) + ATP + H2O = D-methionine(in) + ADP + phosphate + H(+). In terms of biological role, part of the ABC transporter complex MetNIQ involved in methionine import. Responsible for energy coupling to the transport system. This chain is Methionine import ATP-binding protein MetN, found in Cereibacter sphaeroides (strain ATCC 17023 / DSM 158 / JCM 6121 / CCUG 31486 / LMG 2827 / NBRC 12203 / NCIMB 8253 / ATH 2.4.1.) (Rhodobacter sphaeroides).